Consider the following 426-residue polypeptide: Enolase (426 aa).

A disordered region spans residues 38-60 (PSGASTGAHEAVEKRDGDKSRYG). Residues 47–58 (EAVEKRDGDKSR) are compositionally biased toward basic and acidic residues. Residue Gln163 participates in (2R)-2-phosphoglycerate binding. Glu205 acts as the Proton donor in catalysis. Mg(2+) contacts are provided by Asp242, Glu285, and Asp312. Residues Lys337, Arg366, Ser367, and Lys388 each coordinate (2R)-2-phosphoglycerate. Residue Lys337 is the Proton acceptor of the active site.

The protein belongs to the enolase family. The cofactor is Mg(2+).

Its subcellular location is the cytoplasm. It localises to the secreted. It is found in the cell surface. It carries out the reaction (2R)-2-phosphoglycerate = phosphoenolpyruvate + H2O. Its pathway is carbohydrate degradation; glycolysis; pyruvate from D-glyceraldehyde 3-phosphate: step 4/5. Its function is as follows. Catalyzes the reversible conversion of 2-phosphoglycerate (2-PG) into phosphoenolpyruvate (PEP). It is essential for the degradation of carbohydrates via glycolysis. The sequence is that of Enolase from Caulobacter sp. (strain K31).